Here is a 493-residue protein sequence, read N- to C-terminus: Acetyl-coenzyme A carboxylase carboxyl transferase subunit beta (493 aa).

The region spanning 231-493 (LWVQCENCYG…FKLHAFFPLN (263 aa)) is the CoA carboxyltransferase N-terminal domain. C235, C238, C254, and C257 together coordinate Zn(2+). The C4-type zinc-finger motif lies at 235-257 (CENCYGLNYKKFLKSKINLCEQC).

The protein belongs to the AccD/PCCB family. As to quaternary structure, acetyl-CoA carboxylase is a heterohexamer composed of biotin carboxyl carrier protein, biotin carboxylase and 2 subunits each of ACCase subunit alpha and ACCase plastid-coded subunit beta (accD). Zn(2+) serves as cofactor.

The protein resides in the plastid stroma. The catalysed reaction is N(6)-carboxybiotinyl-L-lysyl-[protein] + acetyl-CoA = N(6)-biotinyl-L-lysyl-[protein] + malonyl-CoA. It participates in lipid metabolism; malonyl-CoA biosynthesis; malonyl-CoA from acetyl-CoA: step 1/1. In terms of biological role, component of the acetyl coenzyme A carboxylase (ACC) complex. Biotin carboxylase (BC) catalyzes the carboxylation of biotin on its carrier protein (BCCP) and then the CO(2) group is transferred by the transcarboxylase to acetyl-CoA to form malonyl-CoA. This is Acetyl-coenzyme A carboxylase carboxyl transferase subunit beta from Epifagus virginiana (Beechdrops).